The chain runs to 613 residues: Apoptosis-inducing factor 1, mitochondrial (613 aa).

2 short sequence motifs (mitochondrial localization signal) span residues 1 to 31 (MFRC…PRQR) and 63 to 89 (KIDN…KTMK). The transit peptide at 1–54 (MFRCGGLAAGALKQKLVPLVRTVCVRSPRQRNRLPGNLFQRWHVPLELQMTRQM) directs the protein to the mitochondrion. Positions 55–101 (ASSGASGGKIDNSVLVLIVGLSTVGAGAYAYKTMKEDEKRYNERISG) are cleaved as a propeptide — removed in mature form. Positions 100–127 (SGLGLTPEQKQKKAALSASEGEEVPQDK) are disordered. Residue threonine 105 is modified to Phosphothreonine. Lysine 109 carries the post-translational modification N6-succinyllysine. A phosphoserine mark is found at serine 116 and serine 118. The tract at residues 134–483 (FLLIGGGTAA…KPYWHQSMFW (350 aa)) is FAD-dependent oxidoreductase. FAD is bound by residues 138-142 (GGGTA), 164-165 (ED), arginine 172, and lysine 177. Tryptophan 196 is a binding site for NAD(+). An FAD-binding site is contributed by valine 233. Lysine 255 is covalently cross-linked (Glycyl lysine isopeptide (Lys-Gly) (interchain with G-Cter in ubiquitin)). The residue at position 268 (serine 268) is a Phosphoserine. Residue arginine 285 coordinates FAD. Serine 292 is modified (phosphoserine). Residues 308–311 (GGFL), glutamate 336, and lysine 342 contribute to the NAD(+) site. Phosphoserine is present on serine 371. N6-acetyllysine is present on lysine 388. NAD(+) is bound at residue glycine 399. Residue aspartate 438 participates in FAD binding. Positions 446 to 451 (KLGRRR) match the Nuclear localization signal motif. NAD(+) is bound by residues 453–454 (EH), tryptophan 483, and glutamate 493. FAD contacts are provided by residues 454 to 455 (HH) and tryptophan 483. Over residues 513–529 (AQDNPKSATEQSGTGIR) the composition is skewed to polar residues. Residues 513–554 (AQDNPKSATEQSGTGIRSESETESEASEITIPPSTPAVPQAP) form a disordered region. Phosphothreonine is present on threonine 521. Phosphoserine occurs at positions 524 and 530. Asparagine 583 provides a ligand contact to NAD(+). N6-acetyllysine is present on lysine 593.

The protein belongs to the FAD-dependent oxidoreductase family. Monomer (oxidized form). Homodimer (reduced form). Upon reduction with NADH, undergoes dimerization and forms tight, long-lived FADH2-NAD charge transfer complexes (CTC) resistant to oxidation. Also dimerizes with isoform 3 preventing its release from mitochondria. Interacts with XIAP/BIRC4. Interacts (via N-terminus) with EIF3G (via C-terminus). Interacts with PRELID1. Interacts with CHCHD4; the interaction increases in presence of NADH. Interacts with processed form of PARP1 (Poly [ADP-ribose] polymerase 1, processed C-terminus); interaction is mediated with poly-ADP-ribose chains attached to PARP1, promoting translocation into the nucleus. FAD is required as a cofactor. Under normal conditions, a 54-residue N-terminal segment is first proteolytically removed during or just after translocation into the mitochondrial intermembrane space (IMS) by the mitochondrial processing peptidase (MPP) to form the inner-membrane-anchored mature form (AIFmit). During apoptosis, it is further proteolytically processed at amino-acid position 101 leading to the generation of the mature form, which is confined to the mitochondrial IMS in a soluble form (AIFsol). AIFsol is released to the cytoplasm in response to specific death signals, and translocated to the nucleus, where it induces nuclear apoptosis in a caspase-independent manner. Post-translationally, ubiquitination by XIAP/BIRC4 does not lead to proteasomal degradation. Ubiquitination at Lys-255 by XIAP/BIRC4 blocks its ability to bind DNA and induce chromatin degradation, thereby inhibiting its ability to induce cell death. As to expression, expressed in all tested tissues. Detected in muscle and skin fibroblasts (at protein level). Expressed in osteoblasts (at protein level). In terms of tissue distribution, brain specific. Expressed in all tested tissues except brain. As to expression, isoform 5 is frequently down-regulated in human cancers.

The protein resides in the mitochondrion intermembrane space. Its subcellular location is the mitochondrion inner membrane. It is found in the cytoplasm. The protein localises to the nucleus. It localises to the perinuclear region. The protein resides in the mitochondrion. Its subcellular location is the cytosol. It carries out the reaction A + NADH + H(+) = AH2 + NAD(+). Functionally, functions both as NADH oxidoreductase and as regulator of apoptosis. In response to apoptotic stimuli, it is released from the mitochondrion intermembrane space into the cytosol and to the nucleus, where it functions as a proapoptotic factor in a caspase-independent pathway. Release into the cytoplasm is mediated upon binding to poly-ADP-ribose chains. The soluble form (AIFsol) found in the nucleus induces 'parthanatos' i.e. caspase-independent fragmentation of chromosomal DNA. Binds to DNA in a sequence-independent manner. Interacts with EIF3G, and thereby inhibits the EIF3 machinery and protein synthesis, and activates caspase-7 to amplify apoptosis. Plays a critical role in caspase-independent, pyknotic cell death in hydrogen peroxide-exposed cells. In contrast, participates in normal mitochondrial metabolism. Plays an important role in the regulation of respiratory chain biogenesis by interacting with CHCHD4 and controlling CHCHD4 mitochondrial import. Has NADH oxidoreductase activity. Does not induce nuclear apoptosis. In terms of biological role, pro-apoptotic isoform. The polypeptide is Apoptosis-inducing factor 1, mitochondrial (Homo sapiens (Human)).